Reading from the N-terminus, the 124-residue chain is Autophagy-related protein 8 (124 aa).

The Phosphatidylethanolamine amidated glycine moiety is linked to residue G116. A propeptide spans 117 to 124 (removed in mature form); it reads GAGPLLEK.

This sequence belongs to the ATG8 family. In terms of assembly, conjugation to phosphatidylethanolamine (PE) leads to homodimerization. Interacts with ATG1, ATG3, ATG4, ATG7 and ATG12. The C-terminal 8 residues of ATG8 are removed by ATG4 to expose Gly-116 at the C-terminus. This Gly-116 forms then a thioester bond with the 'Cys-550' of ATG7 (E1-like activating enzyme) before being transferred to the 'Cys-244' of ATG3 (the specific E2 conjugating enzyme), in order to be finally amidated with phosphatidylethanolamine. This lipid modification anchors ATG8 to membranes and can be reversed by ATG4, releasing soluble ATG8.

It localises to the cytoplasmic vesicle. The protein resides in the cvt vesicle membrane. It is found in the autophagosome membrane. Its subcellular location is the vacuole membrane. In terms of biological role, ubiquitin-like modifier involved in cytoplasm to vacuole transport (Cvt) vesicles and autophagosome formation. With ATG4, mediates the delivery of the vesicles and autophagosomes to the vacuole via the microtubule cytoskeleton. Required for selective autophagic degradation of the nucleus (nucleophagy) as well as for mitophagy which contributes to regulate mitochondrial quantity and quality by eliminating the mitochondria to a basal level to fulfill cellular energy requirements and preventing excess ROS production. Also participates in membrane fusion events that take place in the early secretory pathway. Also involved in endoplasmic reticulum-specific autophagic process and is essential for the survival of cells subjected to severe ER stress. The ATG8-PE conjugate mediates tethering between adjacent membranes and stimulates membrane hemifusion, leading to expansion of the autophagosomal membrane during autophagy. Moreover not only conjugation, but also subsequent ATG8-PE deconjugation is an important step required to facilitate multiple events during macroautophagy, and especially for efficient autophagosome biogenesis, the assembly of ATG9-containing tubulovesicular clusters into phagophores/autophagosomes, and for the disassembly of PAS-associated ATG components. In Kluyveromyces marxianus (strain DMKU3-1042 / BCC 29191 / NBRC 104275) (Yeast), this protein is Autophagy-related protein 8.